The following is a 105-amino-acid chain: Heat shock protein HspQ (105 aa).

Residues 75–105 (GEAQEAHPEQPSLDELAESIRHQLQAPRLRN) are disordered.

This sequence belongs to the HspQ family.

Its subcellular location is the cytoplasm. In terms of biological role, involved in the degradation of certain denaturated proteins, including DnaA, during heat shock stress. This is Heat shock protein HspQ from Serratia proteamaculans (strain 568).